Reading from the N-terminus, the 440-residue chain is Ribulose bisphosphate carboxylase large chain (440 aa).

Lysine 3 is modified (N6,N6,N6-trimethyllysine). Substrate-binding residues include asparagine 112 and threonine 162. The active-site Proton acceptor is the lysine 164. Lysine 166 contacts substrate. Mg(2+)-binding residues include lysine 190, aspartate 192, and glutamate 193. An N6-carboxylysine modification is found at lysine 190. The active-site Proton acceptor is histidine 283. Substrate contacts are provided by arginine 284, histidine 316, and serine 368.

It belongs to the RuBisCO large chain family. Type I subfamily. As to quaternary structure, heterohexadecamer of 8 large chains and 8 small chains; disulfide-linked. The disulfide link is formed within the large subunit homodimers. Mg(2+) is required as a cofactor. Post-translationally, the disulfide bond which can form in the large chain dimeric partners within the hexadecamer appears to be associated with oxidative stress and protein turnover.

Its subcellular location is the plastid. The protein localises to the chloroplast. The catalysed reaction is 2 (2R)-3-phosphoglycerate + 2 H(+) = D-ribulose 1,5-bisphosphate + CO2 + H2O. It catalyses the reaction D-ribulose 1,5-bisphosphate + O2 = 2-phosphoglycolate + (2R)-3-phosphoglycerate + 2 H(+). In terms of biological role, ruBisCO catalyzes two reactions: the carboxylation of D-ribulose 1,5-bisphosphate, the primary event in carbon dioxide fixation, as well as the oxidative fragmentation of the pentose substrate in the photorespiration process. Both reactions occur simultaneously and in competition at the same active site. This chain is Ribulose bisphosphate carboxylase large chain, found in Bambusa multiplex (Hedge bamboo).